Here is a 432-residue protein sequence, read N- to C-terminus: Adenylosuccinate synthetase (432 aa).

GTP is bound by residues 13–19 (GDEGKGK) and 41–43 (GHT). The active-site Proton acceptor is the Asp14. Mg(2+)-binding residues include Asp14 and Gly41. IMP is bound by residues 14 to 17 (DEGK), 39 to 42 (NAGH), Thr130, Arg144, Gln225, Thr240, and Arg304. The active-site Proton donor is the His42. 300–306 (AVTGRPR) serves as a coordination point for substrate. GTP is bound by residues Arg306, 332–334 (KLD), and 415–417 (STG).

It belongs to the adenylosuccinate synthetase family. In terms of assembly, homodimer. Mg(2+) serves as cofactor.

The protein localises to the cytoplasm. The enzyme catalyses IMP + L-aspartate + GTP = N(6)-(1,2-dicarboxyethyl)-AMP + GDP + phosphate + 2 H(+). Its pathway is purine metabolism; AMP biosynthesis via de novo pathway; AMP from IMP: step 1/2. In terms of biological role, plays an important role in the de novo pathway of purine nucleotide biosynthesis. Catalyzes the first committed step in the biosynthesis of AMP from IMP. The sequence is that of Adenylosuccinate synthetase from Actinobacillus succinogenes (strain ATCC 55618 / DSM 22257 / CCUG 43843 / 130Z).